Consider the following 288-residue polypeptide: MRLRLQVLVALLTCSSISVSLAYKPVVILHGILSGAESMASLVREIEEFHPGTIVYNCDKFNGWYSLENAWRQVDQVRDYLNEVGKLHPEGIIVLGYSQGGLLARAAIQSLPEHNVKTFISLSSPQAGQYGTSFLHLIFPDLAAKTAFELFYSRVGQHTSVGGYWNDPQRQDLYLKYSEFLPLINNEKKTSNSTSFKMGMVRLNKLVMIGGPNDDVITPWQSSHFGYFDENMDVIPFIRRPIFTSDSIGIRTLQEAGKLIIVVKPHVHHLAWHTRRDVIHEVIFPYLD.

A signal peptide spans 1–22 (MRLRLQVLVALLTCSSISVSLA). Serine 98 (nucleophile) is an active-site residue. Asparagine 192 is a glycosylation site (N-linked (GlcNAc...) asparagine). Residues aspartate 214 and histidine 269 contribute to the active site.

The protein belongs to the palmitoyl-protein thioesterase family. As to expression, expressed in adult head and crop.

It is found in the lysosome. The enzyme catalyses hexadecanoyl-CoA + H2O = hexadecanoate + CoA + H(+). It carries out the reaction S-hexadecanoyl-N-acetylcysteamine + H2O = N-acetylcysteamine + hexadecanoate + H(+). In terms of biological role, catalyzes the cleavage of thioester bonds from S-palmitoyl-CoA or S-palmitoyl-N-acetylcysteamine (unbranched structures) but does not have activity against palmitoylcysteine or palmitoylated proteins, branched structures or bulky head groups. Conversely, hydrolyzes both long and short chain fatty acyl-CoA substrate. This Drosophila melanogaster (Fruit fly) protein is Lysosomal thioesterase PPT2 homolog (Ppt2).